The following is a 419-amino-acid chain: Putative polyketide beta-ketoacyl synthase 2 (419 aa).

The Ketosynthase family 3 (KS3) domain maps to 10-413 (TRRTAVTGIG…GSNAALVLRP (404 aa)).

It belongs to the thiolase-like superfamily. Beta-ketoacyl-ACP synthases family.

It participates in antibiotic biosynthesis; curamycin biosynthesis. In Streptomyces cyaneus (Streptomyces curacoi), this protein is Putative polyketide beta-ketoacyl synthase 2 (curB).